The following is a 196-amino-acid chain: Ribosome-binding factor A (196 aa).

Belongs to the RbfA family. As to quaternary structure, monomer. Binds 30S ribosomal subunits, but not 50S ribosomal subunits or 70S ribosomes.

Its subcellular location is the cytoplasm. In terms of biological role, one of several proteins that assist in the late maturation steps of the functional core of the 30S ribosomal subunit. Associates with free 30S ribosomal subunits (but not with 30S subunits that are part of 70S ribosomes or polysomes). Required for efficient processing of 16S rRNA. May interact with the 5'-terminal helix region of 16S rRNA. This is Ribosome-binding factor A from Tropheryma whipplei (strain TW08/27) (Whipple's bacillus).